Consider the following 453-residue polypeptide: Ribose 1,5-bisphosphate phosphokinase PhnN (453 aa).

The disordered stretch occupies residues 1–21 (MHGSTGFVQGTRPAGDQADPL). The tract at residues 1–271 (MHGSTGFVQG…SGQGERASLP (271 aa)) is unknown. Residues 272 to 453 (HSGRIFFCVG…KLLDILRQAK (182 aa)) form a ribose 1,5-bisphosphokinase region.

It in the C-terminal section; belongs to the ribose 1,5-bisphosphokinase family.

The enzyme catalyses alpha-D-ribose 1,5-bisphosphate + ATP = 5-phospho-alpha-D-ribose 1-diphosphate + ADP. It participates in metabolic intermediate biosynthesis; 5-phospho-alpha-D-ribose 1-diphosphate biosynthesis; 5-phospho-alpha-D-ribose 1-diphosphate from D-ribose 5-phosphate (route II): step 3/3. In terms of biological role, catalyzes the phosphorylation of ribose 1,5-bisphosphate to 5-phospho-D-ribosyl alpha-1-diphosphate (PRPP). The polypeptide is Ribose 1,5-bisphosphate phosphokinase PhnN (phnN) (Janthinobacterium sp. (strain Marseille) (Minibacterium massiliensis)).